We begin with the raw amino-acid sequence, 277 residues long: Caspase-3 (277 aa).

Residue Met-1 is modified to N-acetylmethionine. 2 propeptides span residues 1–9 (MDNNETSVD) and 10–28 (SKSI…KSMD). Position 11 is an N6-acetyllysine (Lys-11). The residue at position 26 (Ser-26) is a Phosphoserine. Catalysis depends on residues His-121 and Cys-163. Cys-163 bears the S-nitrosocysteine; in inhibited form mark.

The protein belongs to the peptidase C14A family. Heterotetramer that consists of two anti-parallel arranged heterodimers, each one formed by a 17 kDa (p17) and a 12 kDa (p12) subunit. Interacts with BIRC6/bruce. Post-translationally, cleavage by granzyme B, caspase-6, caspase-8 and caspase-10 generates the two active subunits. Additional processing of the propeptides is likely due to the autocatalytic activity of the activated protease. Active heterodimers between the small subunit of caspase-7 protease and the large subunit of caspase-3 also occur and vice versa. S-nitrosylated on its catalytic site cysteine in unstimulated cell lines and denitrosylated upon activation of the Fas apoptotic pathway, associated with an increase in intracellular caspase activity. Fas therefore activates caspase-3 not only by inducing the cleavage of the caspase zymogen to its active subunits, but also by stimulating the denitrosylation of its active site thiol. In terms of processing, ubiquitinated by BIRC6; this activity is inhibited by DIABLO/SMAC. As to expression, expressed in heart, brain, liver, and muscle but not in kidney or testis.

The protein localises to the cytoplasm. The enzyme catalyses Strict requirement for an Asp residue at positions P1 and P4. It has a preferred cleavage sequence of Asp-Xaa-Xaa-Asp-|- with a hydrophobic amino-acid residue at P2 and a hydrophilic amino-acid residue at P3, although Val or Ala are also accepted at this position.. With respect to regulation, inhibited by BIRC6; following inhibition of BIRC6-caspase binding by DIABLO/SMAC, BIRC6 is subjected to caspase cleavage, leading to an increase in active caspases. Functionally, involved in the activation cascade of caspases responsible for apoptosis execution. At the onset of apoptosis, it proteolytically cleaves poly(ADP-ribose) polymerase PARP1 at a '216-Asp-|-Gly-217' bond. Cleaves and activates sterol regulatory element binding proteins (SREBPs) between the basic helix-loop-helix leucine zipper domain and the membrane attachment domain. Cleaves and activates caspase-6, -7 and -9 (CASP6, CASP7 and CASP9, respectively). Cleaves and inactivates interleukin-18 (IL18). Triggers cell adhesion in sympathetic neurons through RET cleavage. Cleaves IL-1 beta between an Asp and an Ala, releasing the mature cytokine which is involved in a variety of inflammatory processes. Cleaves and inhibits serine/threonine-protein kinase AKT1 in response to oxidative stress. Acts as an inhibitor of type I interferon production during virus-induced apoptosis by mediating cleavage of antiviral proteins CGAS, IRF3 and MAVS, thereby preventing cytokine overproduction. Also involved in pyroptosis by mediating cleavage and activation of gasdermin-E (GSDME). Cleaves XRCC4 and phospholipid scramblase proteins XKR4, XKR8 and XKR9, leading to promote phosphatidylserine exposure on apoptotic cell surface. Cleaves BIRC6 following inhibition of BIRC6-caspase binding by DIABLO/SMAC. The sequence is that of Caspase-3 (Casp3) from Rattus norvegicus (Rat).